Consider the following 287-residue polypeptide: MKNFEVLQPLQNSLSGLPLWVSERILQQINQLTHYEPVIGIMGKTGAGKSSLCNALFAGEVSPVSDVAACTRDPLRFRLQIGEHFMTIVDLPGVGESGVRDTEYAALYREQLPRLDLILWLIKADDRALATDEHFYRQVIGEAYRHKMLFVISQSDKAEPTSGGNILSTEQKQNISRKICLLHELFQPVHPVCAVSVRLQWGLRVMAERMIKCLPREASSPVVALLQHPFRTTVAREQARDDFGETVGAILDTVSTFPLIPAPVRTIIQAVRSSVVSVARAVWDFFF.

GTP contacts are provided by residues 43–50, 90–93, and 156–159; these read GKTGAGKS, DLPG, and DKAE. Positions 48-140 constitute a G domain; it reads GKSSLCNALF…TDEHFYRQVI (93 aa).

The protein to E.coli YkfA and YeeP.

This is an uncharacterized protein from Escherichia coli (strain K12).